Consider the following 806-residue polypeptide: Ribonucleoside-diphosphate reductase large subunit (806 aa).

The region spanning Met1–Asp91 is the ATP-cone domain. ATP-binding positions include Asn5 to Arg6, Glu11 to Gln17, Thr52, and Asp56. Ser215 contacts GDP. Cysteines 216 and 442 form a disulfide. Residues Asp224–Ile226, Lys241, Arg254, and Arg261–Gly262 contribute to the dTTP site. Position 425 (Asn425) interacts with GDP. Catalysis depends on Asn425, which acts as the Proton acceptor. Residue Cys427 is the Cysteine radical intermediate of the active site. GDP contacts are provided by residues Glu429 and Thr604–Thr607. Residue Glu429 is the Proton acceptor of the active site.

This sequence belongs to the ribonucleoside diphosphate reductase large chain family. Heterodimer of a large and a small subunit.

The catalysed reaction is a 2'-deoxyribonucleoside 5'-diphosphate + [thioredoxin]-disulfide + H2O = a ribonucleoside 5'-diphosphate + [thioredoxin]-dithiol. Under complex allosteric control mediated by deoxynucleoside triphosphates and ATP binding to separate specificity and activation sites on the large subunit. The type of nucleotide bound at the specificity site determines substrate preference. It seems probable that ATP makes the enzyme reduce CDP and UDP, dGTP favors ADP reduction and dTTP favors GDP reduction. Stimulated by ATP and inhibited by dATP binding to the activity site. Provides the precursors necessary for DNA synthesis. Catalyzes the biosynthesis of deoxyribonucleotides from the corresponding ribonucleotides. The chain is Ribonucleoside-diphosphate reductase large subunit (RNR1) from Plasmodium falciparum (isolate Dd2).